The following is a 201-amino-acid chain: Recombination protein RecR (201 aa).

The C4-type zinc finger occupies 60 to 75 (CKVCGNIDTQNPCTVC). The Toprim domain maps to 83-178 (SIIVVVADVA…KVTRLAHGVP (96 aa)).

Belongs to the RecR family.

Functionally, may play a role in DNA repair. It seems to be involved in an RecBC-independent recombinational process of DNA repair. It may act with RecF and RecO. The sequence is that of Recombination protein RecR from Rhodopseudomonas palustris (strain BisB18).